Here is a 629-residue protein sequence, read N- to C-terminus: tRNA uridine 5-carboxymethylaminomethyl modification enzyme MnmG (629 aa).

Residues 13-18 (GGGHAG), valine 125, and serine 180 each bind FAD. 273 to 287 (GPRYCPSIEDKVMRF) contacts NAD(+). An FAD-binding site is contributed by glutamine 370.

Belongs to the MnmG family. Homodimer. Heterotetramer of two MnmE and two MnmG subunits. FAD serves as cofactor.

The protein resides in the cytoplasm. Its function is as follows. NAD-binding protein involved in the addition of a carboxymethylaminomethyl (cmnm) group at the wobble position (U34) of certain tRNAs, forming tRNA-cmnm(5)s(2)U34. The polypeptide is tRNA uridine 5-carboxymethylaminomethyl modification enzyme MnmG (Escherichia coli O139:H28 (strain E24377A / ETEC)).